A 581-amino-acid polypeptide reads, in one-letter code: Protein phosphatase 2C 70 (581 aa).

The Extracellular segment spans residues Met-1–Asn-7. A helical transmembrane segment spans residues Ile-8–Cys-28. The Cytoplasmic portion of the chain corresponds to Lys-29–Leu-581. The 52-residue stretch at Val-208–Ile-259 folds into the FHA domain. The 274-residue stretch at Lys-304–Phe-577 folds into the PPM-type phosphatase domain. Mn(2+) is bound by residues Asp-346, Gly-347, Asp-521, and Asp-568.

As to quaternary structure, association of RLK5 with kapp domain is dependent on phosphorylation of RLK5 and can be abolished by dephosphorylation. Interacts with SERK1 and CDC48A. Component of the SERK1 signaling complex, composed of KAPP, CDC48A, GRF6 or GRF7, SERK1, SERK2, SERK3/BAK1 and BRI1. Interacts with CLV1. Mg(2+) is required as a cofactor. Requires Mn(2+) as cofactor. As to expression, expressed in all tissues examined.

It localises to the cell membrane. It carries out the reaction O-phospho-L-seryl-[protein] + H2O = L-seryl-[protein] + phosphate. The enzyme catalyses O-phospho-L-threonyl-[protein] + H2O = L-threonyl-[protein] + phosphate. In terms of biological role, dephosphorylates the Ser/Thr receptor-like kinase RLK5. May function as a signaling component in a pathway involving RLK5. Binds and dephosphorylates CLAVATA1 (CLV1). Functions as a negative regulator of the CLV1 signaling in plant development. Dephosphorylates SERK1 receptor kinase on threonine residues in the A-loop. Dephosphorylation of SERK1 controls SERK1 internalization. Component of a signaling pathway which mediates adaptation to NaCl stress. Is not a component of the SALT OVERLY SENSITIVE (SOS) pathway. The polypeptide is Protein phosphatase 2C 70 (Arabidopsis thaliana (Mouse-ear cress)).